Reading from the N-terminus, the 340-residue chain is Phosphoribosylformylglycinamidine cyclo-ligase (340 aa).

It belongs to the AIR synthase family.

The protein localises to the cytoplasm. It catalyses the reaction 2-formamido-N(1)-(5-O-phospho-beta-D-ribosyl)acetamidine + ATP = 5-amino-1-(5-phospho-beta-D-ribosyl)imidazole + ADP + phosphate + H(+). The protein operates within purine metabolism; IMP biosynthesis via de novo pathway; 5-amino-1-(5-phospho-D-ribosyl)imidazole from N(2)-formyl-N(1)-(5-phospho-D-ribosyl)glycinamide: step 2/2. The polypeptide is Phosphoribosylformylglycinamidine cyclo-ligase (Streptococcus sanguinis (strain SK36)).